A 119-amino-acid chain; its full sequence is Large ribosomal subunit protein uL18 (119 aa).

The protein belongs to the universal ribosomal protein uL18 family. In terms of assembly, part of the 50S ribosomal subunit; part of the 5S rRNA/L5/L18/L25 subcomplex. Contacts the 5S and 23S rRNAs.

This is one of the proteins that bind and probably mediate the attachment of the 5S RNA into the large ribosomal subunit, where it forms part of the central protuberance. The sequence is that of Large ribosomal subunit protein uL18 from Clostridium tetani (strain Massachusetts / E88).